The primary structure comprises 302 residues: 1,2-dihydroxynaphthalene dioxygenase (302 aa).

VOC domains lie at 9 to 124 (ELGY…IFWG) and 149 to 270 (GLGH…PGWR). Residue His152 participates in Fe cation binding. Residues His152, 199–200 (DH), His215, and Tyr256 contribute to the substrate site. Position 215 (His215) interacts with Fe cation. Glu266 is a Fe cation binding site.

Belongs to the extradiol ring-cleavage dioxygenase family. It depends on Fe(2+) as a cofactor.

It carries out the reaction naphthalene-1,2-diol + O2 = 2-hydroxychromene-2-carboxylate + H(+). It participates in aromatic compound metabolism; naphthalene degradation. With respect to regulation, inhibited by bathophenanthroline sulfonate, o-phenanthroline, 8-hydroxyquinoline, 2,2'-dipyridyl and p-chlormercuribenzoate. Also inhibited by Hg(2+), Cu(2+), Co(2+) and Fe(3+) ions. Its function is as follows. Involved in the naphthalene catabolic pathway. Catalyzes the meta-cleavage of 1,2-dihydroxynaphthalene (1,2-DHN) to yield 2-hydroxychromene-2-carboxylic acid. Can also cleave 3-methylcatechol and 4-methylcatechol. In Pseudomonas putida (Arthrobacter siderocapsulatus), this protein is 1,2-dihydroxynaphthalene dioxygenase (nahC).